A 271-amino-acid chain; its full sequence is 4-hydroxy-tetrahydrodipicolinate reductase (271 aa).

8 to 13 (GITGRM) provides a ligand contact to NAD(+). R35 is a binding site for NADP(+). NAD(+) is bound by residues 100–102 (GST) and 124–127 (APNM). H157 acts as the Proton donor/acceptor in catalysis. Residue H158 participates in (S)-2,3,4,5-tetrahydrodipicolinate binding. The active-site Proton donor is K161. 167-168 (GT) contributes to the (S)-2,3,4,5-tetrahydrodipicolinate binding site.

Belongs to the DapB family.

It is found in the cytoplasm. The catalysed reaction is (S)-2,3,4,5-tetrahydrodipicolinate + NAD(+) + H2O = (2S,4S)-4-hydroxy-2,3,4,5-tetrahydrodipicolinate + NADH + H(+). It carries out the reaction (S)-2,3,4,5-tetrahydrodipicolinate + NADP(+) + H2O = (2S,4S)-4-hydroxy-2,3,4,5-tetrahydrodipicolinate + NADPH + H(+). Its pathway is amino-acid biosynthesis; L-lysine biosynthesis via DAP pathway; (S)-tetrahydrodipicolinate from L-aspartate: step 4/4. Its function is as follows. Catalyzes the conversion of 4-hydroxy-tetrahydrodipicolinate (HTPA) to tetrahydrodipicolinate. The polypeptide is 4-hydroxy-tetrahydrodipicolinate reductase (Myxococcus xanthus (strain DK1622)).